The sequence spans 214 residues: Small ribosomal subunit protein eS1 (214 aa).

The protein belongs to the eukaryotic ribosomal protein eS1 family.

The protein is Small ribosomal subunit protein eS1 of Aeropyrum pernix (strain ATCC 700893 / DSM 11879 / JCM 9820 / NBRC 100138 / K1).